A 162-amino-acid chain; its full sequence is NADH-quinone oxidoreductase subunit I (162 aa).

4Fe-4S ferredoxin-type domains follow at residues leucine 53–glutamate 83 and threonine 93–isoleucine 122. Cysteine 63, cysteine 66, cysteine 69, cysteine 73, cysteine 102, cysteine 105, cysteine 108, and cysteine 112 together coordinate [4Fe-4S] cluster.

Belongs to the complex I 23 kDa subunit family. In terms of assembly, NDH-1 is composed of 14 different subunits. Subunits NuoA, H, J, K, L, M, N constitute the membrane sector of the complex. It depends on [4Fe-4S] cluster as a cofactor.

It is found in the cell inner membrane. It carries out the reaction a quinone + NADH + 5 H(+)(in) = a quinol + NAD(+) + 4 H(+)(out). Its function is as follows. NDH-1 shuttles electrons from NADH, via FMN and iron-sulfur (Fe-S) centers, to quinones in the respiratory chain. The immediate electron acceptor for the enzyme in this species is believed to be ubiquinone. Couples the redox reaction to proton translocation (for every two electrons transferred, four hydrogen ions are translocated across the cytoplasmic membrane), and thus conserves the redox energy in a proton gradient. The chain is NADH-quinone oxidoreductase subunit I from Bordetella bronchiseptica (strain ATCC BAA-588 / NCTC 13252 / RB50) (Alcaligenes bronchisepticus).